The sequence spans 300 residues: Protoheme IX farnesyltransferase (300 aa).

The next 9 membrane-spanning stretches (helical) occupy residues 24 to 44 (VTQLAVFCAVIGMFLATPGMV), 48 to 68 (VLIGGTVGIWLLAGAAFAINC), 94 to 114 (PQILLFSAVLGSIGAWTLYTF), 118 to 138 (LTMWLTIATFVGYAVIYTLLL), 146 to 166 (IVIGGASGAMPPALGWAAVTG), 172 to 192 (AWILVLIIFVWTPPHFWVLAL), 217 to 237 (LHILLYTVILFAVTLMPFISG), 239 to 259 (SGAVYLTSAVLLGAVFLAYAW), and 278 to 298 (IVYLSLLFAALLVDHYARPLL).

Belongs to the UbiA prenyltransferase family. Protoheme IX farnesyltransferase subfamily.

Its subcellular location is the cell inner membrane. The catalysed reaction is heme b + (2E,6E)-farnesyl diphosphate + H2O = Fe(II)-heme o + diphosphate. The protein operates within porphyrin-containing compound metabolism; heme O biosynthesis; heme O from protoheme: step 1/1. In terms of biological role, converts heme B (protoheme IX) to heme O by substitution of the vinyl group on carbon 2 of heme B porphyrin ring with a hydroxyethyl farnesyl side group. This is Protoheme IX farnesyltransferase from Burkholderia vietnamiensis (strain G4 / LMG 22486) (Burkholderia cepacia (strain R1808)).